Here is a 61-residue protein sequence, read N- to C-terminus: Sodium/potassium-transporting ATPase subunit gamma (61 aa).

The helical transmembrane segment at 24-44 (KGGLIFAAIAFVVGMLIIFSG) threads the bilayer.

The protein belongs to the FXYD family. In terms of assembly, regulatory subunit of the sodium/potassium-transporting ATPase which is composed of a catalytic alpha subunit, an auxiliary non-catalytic beta subunit and an additional regulatory subunit.

The protein resides in the membrane. In terms of biological role, may be involved in forming the receptor site for cardiac glycoside binding or may modulate the transport function of the sodium ATPase. This chain is Sodium/potassium-transporting ATPase subunit gamma (fxyd2), found in Xenopus laevis (African clawed frog).